Reading from the N-terminus, the 196-residue chain is Kunitz trypsin inhibitor 5 (196 aa).

Residues 1–19 form the signal peptide; the sequence is MSSLLYIFLLLAVFISHRG. The cysteines at positions 156 and 167 are disulfide-linked.

Belongs to the protease inhibitor I3 (leguminous Kunitz-type inhibitor) family.

The protein localises to the endoplasmic reticulum. Its function is as follows. Can inhibit both serine proteases and cysteine proteases. May be involved in the modulation of the proteases that participate in the hydrolysis of dietary proteins in the gut of spider mites. The chain is Kunitz trypsin inhibitor 5 from Arabidopsis thaliana (Mouse-ear cress).